The chain runs to 120 residues: Small ribosomal subunit protein uS19 (120 aa).

It belongs to the universal ribosomal protein uS19 family.

The chain is Small ribosomal subunit protein uS19 (RPS15) from Naegleria gruberi (Amoeba).